Consider the following 158-residue polypeptide: SsrA-binding protein (158 aa).

The interval 133–158 (QLHDKRETEKKRDWNKEKGRLLRDKH) is disordered.

Belongs to the SmpB family.

It is found in the cytoplasm. Its function is as follows. Required for rescue of stalled ribosomes mediated by trans-translation. Binds to transfer-messenger RNA (tmRNA), required for stable association of tmRNA with ribosomes. tmRNA and SmpB together mimic tRNA shape, replacing the anticodon stem-loop with SmpB. tmRNA is encoded by the ssrA gene; the 2 termini fold to resemble tRNA(Ala) and it encodes a 'tag peptide', a short internal open reading frame. During trans-translation Ala-aminoacylated tmRNA acts like a tRNA, entering the A-site of stalled ribosomes, displacing the stalled mRNA. The ribosome then switches to translate the ORF on the tmRNA; the nascent peptide is terminated with the 'tag peptide' encoded by the tmRNA and targeted for degradation. The ribosome is freed to recommence translation, which seems to be the essential function of trans-translation. The sequence is that of SsrA-binding protein from Beijerinckia indica subsp. indica (strain ATCC 9039 / DSM 1715 / NCIMB 8712).